A 236-amino-acid chain; its full sequence is Ubiquinone biosynthesis O-methyltransferase (236 aa).

Arg40, Gly59, Asp80, and Leu124 together coordinate S-adenosyl-L-methionine.

Belongs to the methyltransferase superfamily. UbiG/COQ3 family.

The enzyme catalyses a 3-demethylubiquinol + S-adenosyl-L-methionine = a ubiquinol + S-adenosyl-L-homocysteine + H(+). The catalysed reaction is a 3-(all-trans-polyprenyl)benzene-1,2-diol + S-adenosyl-L-methionine = a 2-methoxy-6-(all-trans-polyprenyl)phenol + S-adenosyl-L-homocysteine + H(+). It participates in cofactor biosynthesis; ubiquinone biosynthesis. Functionally, O-methyltransferase that catalyzes the 2 O-methylation steps in the ubiquinone biosynthetic pathway. This is Ubiquinone biosynthesis O-methyltransferase from Nitrosococcus oceani (strain ATCC 19707 / BCRC 17464 / JCM 30415 / NCIMB 11848 / C-107).